Reading from the N-terminus, the 103-residue chain is Secreted Ly-6/uPAR-related protein 1 (103 aa).

An N-terminal signal peptide occupies residues 1–22 (MASRWAVQLLLVAAWSMGCGEA). The 50-residue stretch at 24–73 (KCYTCKEPMTSASCRTITRCKPEDTACMTTLVTVEAEYPFNQSPVVTRSC) folds into the UPAR/Ly6 domain. 5 disulfides stabilise this stretch: Cys-25-Cys-50, Cys-28-Cys-37, Cys-43-Cys-73, Cys-77-Cys-93, and Cys-94-Cys-99.

In terms of assembly, homodimer. Interacts with PLAU. Interacts with CHRNA7. Granulocytes. Expressed in skin. Predominantly expressed in the granular layer of skin, notably the acrosyringium. Identified in several biological fluids such as sweat, saliva, tears, plasma and urine.

It is found in the secreted. In terms of biological role, has an antitumor activity. Was found to be a marker of late differentiation of the skin. Implicated in maintaining the physiological and structural integrity of the keratinocyte layers of the skin. In vitro down-regulates keratinocyte proliferation; the function may involve the proposed role as modulator of nicotinic acetylcholine receptors (nAChRs) activity. In vitro inhibits alpha-7-dependent nAChR currents in an allosteric manner. In T cells may be involved in regulation of intracellular Ca(2+) signaling. Seems to have an immunomodulatory function in the cornea. The function may implicate a possible role as a scavenger receptor for PLAU thereby blocking PLAU-dependent functions of PLAUR such as in cell migration and proliferation. The sequence is that of Secreted Ly-6/uPAR-related protein 1 (SLURP1) from Homo sapiens (Human).